A 355-amino-acid polypeptide reads, in one-letter code: Heterogeneous nuclear ribonucleoprotein D0 (355 aa).

Residues 1–92 (MSEEQFGGDG…SPRHSEAATA (92 aa)) form a disordered region. Position 2 is an N-acetylserine (serine 2). Composition is skewed to low complexity over residues 11–20 (AAAAATAAVG) and 27–42 (EGAMVAATQGAAAAAG). Residues 43–58 (SGAGTGGGTASGGTEG) show a composition bias toward gly residues. The segment covering 64–73 (EGAKIDASKN) has biased composition (basic and acidic residues). Serine 71 bears the Phosphoserine mark. Residue lysine 72 forms a Glycyl lysine isopeptide (Lys-Gly) (interchain with G-Cter in SUMO2) linkage. A phosphoserine mark is found at serine 80, serine 82, and serine 83. A Phosphothreonine modification is found at threonine 91. RRM domains are found at residues 97–179 (WKMF…KTKE) and 182–261 (KKIF…MSKE). Lysine 119 bears the N6-methyllysine mark. Threonine 127 carries the phosphothreonine modification. Lysine 129 participates in a covalent cross-link: Glycyl lysine isopeptide (Lys-Gly) (interchain with G-Cter in SUMO2). Lysine 165 is modified (N6-acetyllysine). Serine 190 is subject to Phosphoserine. A Phosphothreonine modification is found at threonine 193. Residue lysine 197 forms a Glycyl lysine isopeptide (Lys-Gly) (interchain with G-Cter in SUMO2) linkage. 2 positions are modified to N6-acetyllysine: lysine 243 and lysine 251. Omega-N-methylarginine is present on tyrosine 263. The residue at position 271 (serine 271) is a Phosphoserine. Omega-N-methylarginine is present on arginine 272. Glycine 273 is modified (N6-acetyllysine). Arginine 278, arginine 280, and arginine 282 each carry omega-N-methylarginine. Position 292 is an N6-acetyllysine (glutamine 292). Arginine 345 carries the post-translational modification Asymmetric dimethylarginine; alternate. Residue arginine 345 is modified to Dimethylated arginine; alternate. Position 345 is an omega-N-methylarginine; alternate (arginine 345).

In terms of assembly, identified in a IGF2BP1-dependent mRNP granule complex containing untranslated mRNAs. Part of a complex associated with the FOS mCRD domain and consisting of PABPC1, PAIP1, CSDE1/UNR and SYNCRIP. Interacts with IGF2BP2. Interacts with GTPBP1. Interacts with EIF4G1; the interaction requires RNA. Interacts with EIF3B and RPS3. Arg-345 is dimethylated, probably to asymmetric dimethylarginine. In terms of processing, methylated by PRMT1, in an insulin-dependent manner. The PRMT1-mediated methylation regulates tyrosine phosphorylation.

It is found in the nucleus. Its subcellular location is the cytoplasm. In terms of biological role, binds with high affinity to RNA molecules that contain AU-rich elements (AREs) found within the 3'-UTR of many proto-oncogenes and cytokine mRNAs. Also binds to double- and single-stranded DNA sequences in a specific manner and functions a transcription factor. Each of the RNA-binding domains specifically can bind solely to a single-stranded non-monotonous 5'-UUAG-3' sequence and also weaker to the single-stranded 5'-TTAGGG-3' telomeric DNA repeat. Binds RNA oligonucleotides with 5'-UUAGGG-3' repeats more tightly than the telomeric single-stranded DNA 5'-TTAGGG-3' repeats. Binding of RRM1 to DNA inhibits the formation of DNA quadruplex structure which may play a role in telomere elongation. May be involved in translationally coupled mRNA turnover. Implicated with other RNA-binding proteins in the cytoplasmic deadenylation/translational and decay interplay of the FOS mRNA mediated by the major coding-region determinant of instability (mCRD) domain. May play a role in the regulation of the rhythmic expression of circadian clock core genes. Directly binds to the 3'UTR of CRY1 mRNA and induces CRY1 rhythmic translation. May also be involved in the regulation of PER2 translation. This Homo sapiens (Human) protein is Heterogeneous nuclear ribonucleoprotein D0 (HNRNPD).